We begin with the raw amino-acid sequence, 665 residues long: Methionine--tRNA ligase (665 aa).

Residues 12–22 (YYPSGKLHIGS) carry the 'HIGH' region motif. Residues 308 to 312 (KMSKS) carry the 'KMSKS' region motif. Lys-311 is a binding site for ATP. One can recognise a tRNA-binding domain in the interval 562–665 (TFDAVEIRVA…SSVPNGSIIG (104 aa)).

This sequence belongs to the class-I aminoacyl-tRNA synthetase family. MetG type 2B subfamily. In terms of assembly, homodimer.

The protein localises to the cytoplasm. It catalyses the reaction tRNA(Met) + L-methionine + ATP = L-methionyl-tRNA(Met) + AMP + diphosphate. In terms of biological role, is required not only for elongation of protein synthesis but also for the initiation of all mRNA translation through initiator tRNA(fMet) aminoacylation. The protein is Methionine--tRNA ligase (metG) of Streptococcus pyogenes serotype M18 (strain MGAS8232).